A 113-amino-acid chain; its full sequence is Large ribosomal subunit protein eL31B (113 aa).

The protein belongs to the eukaryotic ribosomal protein eL31 family. As to quaternary structure, component of the large ribosomal subunit (LSU). Mature yeast ribosomes consist of a small (40S) and a large (60S) subunit. The 40S small subunit contains 1 molecule of ribosomal RNA (18S rRNA) and 33 different proteins (encoded by 57 genes). The large 60S subunit contains 3 rRNA molecules (25S, 5.8S and 5S rRNA) and 46 different proteins (encoded by 81 genes).

The protein localises to the cytoplasm. In terms of biological role, component of the ribosome, a large ribonucleoprotein complex responsible for the synthesis of proteins in the cell. The small ribosomal subunit (SSU) binds messenger RNAs (mRNAs) and translates the encoded message by selecting cognate aminoacyl-transfer RNA (tRNA) molecules. The large subunit (LSU) contains the ribosomal catalytic site termed the peptidyl transferase center (PTC), which catalyzes the formation of peptide bonds, thereby polymerizing the amino acids delivered by tRNAs into a polypeptide chain. The nascent polypeptides leave the ribosome through a tunnel in the LSU and interact with protein factors that function in enzymatic processing, targeting, and the membrane insertion of nascent chains at the exit of the ribosomal tunnel. In Saccharomyces cerevisiae (strain ATCC 204508 / S288c) (Baker's yeast), this protein is Large ribosomal subunit protein eL31B.